The sequence spans 476 residues: 3-isopropylmalate dehydratase large subunit (476 aa).

[4Fe-4S] cluster is bound by residues cysteine 357, cysteine 417, and cysteine 420.

It belongs to the aconitase/IPM isomerase family. LeuC type 1 subfamily. Heterodimer of LeuC and LeuD. The cofactor is [4Fe-4S] cluster.

The catalysed reaction is (2R,3S)-3-isopropylmalate = (2S)-2-isopropylmalate. The protein operates within amino-acid biosynthesis; L-leucine biosynthesis; L-leucine from 3-methyl-2-oxobutanoate: step 2/4. Catalyzes the isomerization between 2-isopropylmalate and 3-isopropylmalate, via the formation of 2-isopropylmaleate. The chain is 3-isopropylmalate dehydratase large subunit from Mycolicibacterium paratuberculosis (strain ATCC BAA-968 / K-10) (Mycobacterium paratuberculosis).